The sequence spans 269 residues: Regulatory protein RecX (269 aa).

This sequence belongs to the RecX family.

The protein resides in the cytoplasm. Its function is as follows. Modulates RecA activity. This is Regulatory protein RecX from Geobacillus thermodenitrificans (strain NG80-2).